A 266-amino-acid polypeptide reads, in one-letter code: Small ribosomal subunit protein uS2 (266 aa).

Residues 229 to 254 (RTSDKEADTTTEEVAQEEVTDTKADE) form a disordered region. The segment covering 237 to 247 (TTTEEVAQEEV) has biased composition (acidic residues).

The protein belongs to the universal ribosomal protein uS2 family.

The polypeptide is Small ribosomal subunit protein uS2 (Flavobacterium psychrophilum (strain ATCC 49511 / DSM 21280 / CIP 103535 / JIP02/86)).